Here is a 692-residue protein sequence, read N- to C-terminus: Elongation factor G (692 aa).

A tr-type G domain is found at 8–282 (ENTRNIGIMA…AVIDYLPSPL (275 aa)). GTP is bound by residues 17 to 24 (AHIDAGKT), 81 to 85 (DTPGH), and 135 to 138 (NKMD).

Belongs to the TRAFAC class translation factor GTPase superfamily. Classic translation factor GTPase family. EF-G/EF-2 subfamily.

It is found in the cytoplasm. Catalyzes the GTP-dependent ribosomal translocation step during translation elongation. During this step, the ribosome changes from the pre-translocational (PRE) to the post-translocational (POST) state as the newly formed A-site-bound peptidyl-tRNA and P-site-bound deacylated tRNA move to the P and E sites, respectively. Catalyzes the coordinated movement of the two tRNA molecules, the mRNA and conformational changes in the ribosome. The protein is Elongation factor G of Bacillus cereus (strain ATCC 10987 / NRS 248).